We begin with the raw amino-acid sequence, 178 residues long: Gamma-crystallin S (178 aa).

Ser-2 carries the N-acetylserine modification. The segment at 2 to 5 (SKAG) is N-terminal arm. Beta/gamma crystallin 'Greek key' domains are found at residues 6 to 44 (TKITFFEDKNFQGRHYDSDCDCADFHMYLSRCNSIRVEG) and 45 to 87 (GTWA…RAVH). Residues 88–93 (LSSGGQ) form a connecting peptide region. 2 Beta/gamma crystallin 'Greek key' domains span residues 94 to 134 (YKLQ…KVLE) and 135 to 177 (GAWI…RRIV).

The protein belongs to the beta/gamma-crystallin family. Monomer.

Crystallins are the dominant structural components of the vertebrate eye lens. The polypeptide is Gamma-crystallin S (CRYGS) (Bos taurus (Bovine)).